The sequence spans 301 residues: Ribosomal RNA small subunit methyltransferase H (301 aa).

Residues 31 to 33 (GGY), aspartate 49, phenylalanine 76, aspartate 97, and glutamine 104 each bind S-adenosyl-L-methionine.

Belongs to the methyltransferase superfamily. RsmH family.

The protein localises to the cytoplasm. It catalyses the reaction cytidine(1402) in 16S rRNA + S-adenosyl-L-methionine = N(4)-methylcytidine(1402) in 16S rRNA + S-adenosyl-L-homocysteine + H(+). In terms of biological role, specifically methylates the N4 position of cytidine in position 1402 (C1402) of 16S rRNA. In Ehrlichia ruminantium (strain Gardel), this protein is Ribosomal RNA small subunit methyltransferase H.